Here is a 345-residue protein sequence, read N- to C-terminus: Phosphate acyltransferase (345 aa).

This sequence belongs to the PlsX family. Homodimer. Probably interacts with PlsY.

Its subcellular location is the cytoplasm. The enzyme catalyses a fatty acyl-[ACP] + phosphate = an acyl phosphate + holo-[ACP]. It participates in lipid metabolism; phospholipid metabolism. Its function is as follows. Catalyzes the reversible formation of acyl-phosphate (acyl-PO(4)) from acyl-[acyl-carrier-protein] (acyl-ACP). This enzyme utilizes acyl-ACP as fatty acyl donor, but not acyl-CoA. The polypeptide is Phosphate acyltransferase (Wolbachia sp. subsp. Brugia malayi (strain TRS)).